We begin with the raw amino-acid sequence, 327 residues long: MSLEEEILWAEKYRPRSLDDIVNQKDIVERLKRFVKDKNMPHLLFSGPPGTGKTTAALALVHDLYGDNYRQYFLELNASDERGIDVIRNKVKEFARTVAGGNVPFKVVLLDEADNMTADAQQALRRTMELYTETTRFILACNYLSKIIEPIQSRTALFRFYPLKKEDVVARLAYIAKNEKVEYDQKALETIYDITQGDMRKAINILQASSVYGKVTVEAVYKVLGLAQPKEIREMIMLALQGNFLKAREKLRELLVNYGLSGEDIIKQIHREVTGNEINIPDDLKVLLVDYIGEVEYRIMEGADDEIQLNALLAKLAVYGEKYLKGK.

Gly47–Thr54 serves as a coordination point for ATP.

This sequence belongs to the activator 1 small subunits family. RfcS subfamily. Heteromultimer composed of small subunits (RfcS) and large subunits (RfcL).

In terms of biological role, part of the RFC clamp loader complex which loads the PCNA sliding clamp onto DNA. The protein is Replication factor C small subunit of Sulfurisphaera tokodaii (strain DSM 16993 / JCM 10545 / NBRC 100140 / 7) (Sulfolobus tokodaii).